We begin with the raw amino-acid sequence, 166 residues long: 6,7-dimethyl-8-ribityllumazine synthase (166 aa).

Residues Phe24, 58 to 60, and 82 to 84 each bind 5-amino-6-(D-ribitylamino)uracil; these read ALE and AVV. Position 87 to 88 (87 to 88) interacts with (2S)-2-hydroxy-3-oxobutyl phosphate; sequence ET. His90 acts as the Proton donor in catalysis. Asn115 contributes to the 5-amino-6-(D-ribitylamino)uracil binding site. Residue Arg129 participates in (2S)-2-hydroxy-3-oxobutyl phosphate binding.

It belongs to the DMRL synthase family.

The enzyme catalyses (2S)-2-hydroxy-3-oxobutyl phosphate + 5-amino-6-(D-ribitylamino)uracil = 6,7-dimethyl-8-(1-D-ribityl)lumazine + phosphate + 2 H2O + H(+). Its pathway is cofactor biosynthesis; riboflavin biosynthesis; riboflavin from 2-hydroxy-3-oxobutyl phosphate and 5-amino-6-(D-ribitylamino)uracil: step 1/2. Catalyzes the formation of 6,7-dimethyl-8-ribityllumazine by condensation of 5-amino-6-(D-ribitylamino)uracil with 3,4-dihydroxy-2-butanone 4-phosphate. This is the penultimate step in the biosynthesis of riboflavin. The sequence is that of 6,7-dimethyl-8-ribityllumazine synthase from Cupriavidus necator (strain ATCC 17699 / DSM 428 / KCTC 22496 / NCIMB 10442 / H16 / Stanier 337) (Ralstonia eutropha).